The chain runs to 55 residues: Neurotoxin X-29S (55 aa).

The first 23 residues, 1 to 23 (MKIFFAVLVILVLFSMLIWTAYG), serve as a signal peptide directing secretion. Disulfide bonds link Cys30/Cys45, Cys36/Cys50, and Cys39/Cys53.

In terms of tissue distribution, expressed by the venom gland.

It localises to the secreted. In Olivierus martensii (Manchurian scorpion), this protein is Neurotoxin X-29S.